The sequence spans 130 residues: Small ribosomal subunit protein uS11 (130 aa).

Belongs to the universal ribosomal protein uS11 family. As to quaternary structure, part of the 30S ribosomal subunit. Interacts with proteins S7 and S18. Binds to IF-3.

Its function is as follows. Located on the platform of the 30S subunit, it bridges several disparate RNA helices of the 16S rRNA. Forms part of the Shine-Dalgarno cleft in the 70S ribosome. The sequence is that of Small ribosomal subunit protein uS11 from Shewanella halifaxensis (strain HAW-EB4).